We begin with the raw amino-acid sequence, 32 residues long: Photosystem II reaction center protein T (32 aa).

A helical transmembrane segment spans residues 3–23 (SIAYVLIFACLIGLFFFAIFF).

Belongs to the PsbT family. In terms of assembly, PSII is composed of 1 copy each of membrane proteins PsbA, PsbB, PsbC, PsbD, PsbE, PsbF, PsbH, PsbI, PsbJ, PsbK, PsbL, PsbM, PsbT, PsbX, PsbY, PsbZ, Psb30/Ycf12, peripheral proteins PsbO, CyanoQ (PsbQ), PsbU, PsbV and a large number of cofactors. It forms dimeric complexes.

The protein localises to the cellular thylakoid membrane. Functionally, found at the monomer-monomer interface of the photosystem II (PS II) dimer, plays a role in assembly and dimerization of PSII. PSII is a light-driven water plastoquinone oxidoreductase, using light energy to abstract electrons from H(2)O, generating a proton gradient subsequently used for ATP formation. The protein is Photosystem II reaction center protein T of Cyanothece sp. (strain PCC 7425 / ATCC 29141).